The primary structure comprises 121 residues: NADH-quinone oxidoreductase subunit A 1 (121 aa).

3 helical membrane passes run 6 to 26 (FPIF…LSIG), 62 to 82 (LVAM…PWAV), and 90 to 110 (FYGL…YYYI).

Belongs to the complex I subunit 3 family. In terms of assembly, NDH-1 is composed of 14 different subunits. Subunits NuoA, H, J, K, L, M, N constitute the membrane sector of the complex.

Its subcellular location is the cell inner membrane. The enzyme catalyses a quinone + NADH + 5 H(+)(in) = a quinol + NAD(+) + 4 H(+)(out). Its function is as follows. NDH-1 shuttles electrons from NADH, via FMN and iron-sulfur (Fe-S) centers, to quinones in the respiratory chain. The immediate electron acceptor for the enzyme in this species is believed to be a menaquinone. Couples the redox reaction to proton translocation (for every two electrons transferred, four hydrogen ions are translocated across the cytoplasmic membrane), and thus conserves the redox energy in a proton gradient. The chain is NADH-quinone oxidoreductase subunit A 1 from Chloroherpeton thalassium (strain ATCC 35110 / GB-78).